Here is a 299-residue protein sequence, read N- to C-terminus: CCR4-NOT transcription complex subunit 9 (299 aa).

Residue Met1 is modified to N-acetylmethionine.

This sequence belongs to the CNOT9 family. As to quaternary structure, homodimer. Component of the CCR4-NOT complex; distinct complexes seem to exist that differ in the participation of probably mutually exclusive catalytic subunits. Interacts with MYB, ATF2, RARA, RARB, RARG, RXRA, RXRB and RXRG. Identified in a complex with ATF2 bound to target DNA. Interacts with NANOS2. Directly interacts with ZNF335.

Its subcellular location is the nucleus. It is found in the cytoplasm. The protein localises to the P-body. Functionally, component of the CCR4-NOT complex which is one of the major cellular mRNA deadenylases and is linked to various cellular processes including bulk mRNA degradation, miRNA-mediated repression, translational repression during translational initiation and general transcription regulation. Additional complex functions may be a consequence of its influence on mRNA expression. Involved in down-regulation of MYB- and JUN-dependent transcription. Enhances ligand-dependent transcriptional activity of nuclear hormone receptors. May play a role in cell differentiation. In Bos taurus (Bovine), this protein is CCR4-NOT transcription complex subunit 9.